The chain runs to 1002 residues: Inversin-B (1002 aa).

16 ANK repeats span residues 9–39 (SLAS…VIDQ), 43–72 (LGRT…KVNR), 76–105 (SGRT…DCTH), 109–140 (CDIT…QVDA), 144–173 (RKQT…NIGI), 177–209 (EGKI…TESL), 216–246 (EGRT…NVAP), 250–279 (LFRT…SPNI), 284–313 (QGAT…VRDE), 317–346 (EGRT…KLEV), 352–381 (YGGT…QADA), 385–414 (MKHT…KVHL), 418–447 (DGRS…NPDA), 451–480 (EGRT…DPNI), 484–513 (NGRT…FPNQ), and 519–549 (ERYT…SIAA). Residues 486-494 (RTALHWSCN) carry the D-box 1 motif. Positions 551–580 (QDIAAFKIQAVYKGHKVRRAFQERKNLLMK) constitute an IQ 1 domain. Basic and acidic residues-rich tracts occupy residues 586 to 599 (KGAA…ENRQ), 609 to 621 (KQKD…RQNK), and 643 to 656 (AEDR…ENLE). Disordered stretches follow at residues 586-804 (KGAA…KGRR) and 862-886 (SAKT…SSSA). 2 stretches are compositionally biased toward polar residues: residues 670-680 (QRITAQIQSSP) and 687-706 (NSIQ…SSPL). Basic and acidic residues-rich tracts occupy residues 733 to 763 (HQME…EERK) and 770 to 796 (QSSD…EGKK). A D-box 2 motif is present at residues 959 to 967 (RKQLFQRKN). The IQ 2 domain maps to 966–995 (KNHAATVIQKAWRTYWVRKSSCKTRHSRSQ).

As to quaternary structure, interacts with apc2. Binds calmodulin.

The protein resides in the cytoplasm. It localises to the cytoskeleton. In terms of biological role, required for normal renal development and establishment of left-right axis. Probably acts as a molecular switch between different Wnt signaling pathways. Inhibits the canonical Wnt pathway by targeting cytoplasmic disheveled for degradation by the ubiquitin-proteasome. This suggests that it is required in renal development to oppose the repression of terminal differentiation of tubular epithelial cells by Wnt signaling. Plays a central role in convergent extension movements in gastrulating embryos, a processus regulated by Wnt signaling. The polypeptide is Inversin-B (invs-b) (Xenopus laevis (African clawed frog)).